Consider the following 333-residue polypeptide: Low specificity L-threonine aldolase (333 aa).

The residue at position 197 (lysine 197) is an N6-(pyridoxal phosphate)lysine.

This sequence belongs to the threonine aldolase family. Homotetramer. Pyridoxal 5'-phosphate serves as cofactor.

The catalysed reaction is L-threonine = acetaldehyde + glycine. It catalyses the reaction L-allo-threonine = acetaldehyde + glycine. Functionally, catalyzes the cleavage of L-allo-threonine and L-threonine to glycine and acetaldehyde. L-threo-phenylserine and L-erythro-phenylserine are also good substrates. This is Low specificity L-threonine aldolase (ltaE) from Escherichia coli (strain K12).